Reading from the N-terminus, the 455-residue chain is 3-phosphoshikimate 1-carboxyvinyltransferase (455 aa).

The interval 1–23 (MSHGSNPRPATARKSSDLKGTLR) is disordered. Residues K28, S29, and R33 each contribute to the 3-phosphoshikimate site. K28 is a binding site for phosphoenolpyruvate. Phosphoenolpyruvate-binding residues include G100 and R128. S173, Q175, D326, and K353 together coordinate 3-phosphoshikimate. Q175 contributes to the phosphoenolpyruvate binding site. D326 acts as the Proton acceptor in catalysis. Positions 357 and 405 each coordinate phosphoenolpyruvate.

This sequence belongs to the EPSP synthase family. Monomer.

It localises to the cytoplasm. It carries out the reaction 3-phosphoshikimate + phosphoenolpyruvate = 5-O-(1-carboxyvinyl)-3-phosphoshikimate + phosphate. The protein operates within metabolic intermediate biosynthesis; chorismate biosynthesis; chorismate from D-erythrose 4-phosphate and phosphoenolpyruvate: step 6/7. Its function is as follows. Catalyzes the transfer of the enolpyruvyl moiety of phosphoenolpyruvate (PEP) to the 5-hydroxyl of shikimate-3-phosphate (S3P) to produce enolpyruvyl shikimate-3-phosphate and inorganic phosphate. This chain is 3-phosphoshikimate 1-carboxyvinyltransferase, found in Rhizobium meliloti (strain 1021) (Ensifer meliloti).